The sequence spans 336 residues: tRNA (guanine(10)-N2)-dimethyltransferase (336 aa).

The THUMP domain maps to 50–147 (KILKKRLAYA…NDRFILTRRL (98 aa)).

The protein belongs to the methyltransferase superfamily. Trm-G10 family. Monomer.

Its subcellular location is the cytoplasm. It catalyses the reaction guanosine(10) in tRNA + 2 S-adenosyl-L-methionine = N(2)-dimethylguanosine(10) in tRNA + 2 S-adenosyl-L-homocysteine + 2 H(+). Its function is as follows. Catalyzes the adenosylmethionine-dependent methylation of the exocyclic amino group (N(2)) of guanosine at position 10 of various tRNAs. Acts via a two-step process that leads to the formation of either N(2)-monomethyl (m(2)G) or N(2)-dimethylguanosine (m(2)(2)G). In Methanothermobacter thermautotrophicus (strain ATCC 29096 / DSM 1053 / JCM 10044 / NBRC 100330 / Delta H) (Methanobacterium thermoautotrophicum), this protein is tRNA (guanine(10)-N2)-dimethyltransferase (trmG10).